A 253-amino-acid polypeptide reads, in one-letter code: Triosephosphate isomerase (253 aa).

9-11 (NWK) provides a ligand contact to substrate. Residue His-97 is the Electrophile of the active site. The Proton acceptor role is filled by Glu-169. Residues Gly-175, Ser-215, and 236–237 (GG) contribute to the substrate site.

This sequence belongs to the triosephosphate isomerase family. In terms of assembly, homodimer.

The protein localises to the cytoplasm. It catalyses the reaction D-glyceraldehyde 3-phosphate = dihydroxyacetone phosphate. It participates in carbohydrate biosynthesis; gluconeogenesis. It functions in the pathway carbohydrate degradation; glycolysis; D-glyceraldehyde 3-phosphate from glycerone phosphate: step 1/1. Its function is as follows. Involved in the gluconeogenesis. Catalyzes stereospecifically the conversion of dihydroxyacetone phosphate (DHAP) to D-glyceraldehyde-3-phosphate (G3P). In Staphylococcus haemolyticus (strain JCSC1435), this protein is Triosephosphate isomerase.